The following is a 276-amino-acid chain: Halorhodopsin (276 aa).

Residues 1-20 constitute a propeptide that is removed on maturation; it reads MTAASTTATTVLQATQSDVL. Glutamine 21 is subject to Pyrrolidone carboxylic acid. 7 consecutive transmembrane segments (helical) span residues 31 to 51, 61 to 81, 109 to 129, 134 to 154, 162 to 182, 195 to 215, and 220 to 240; these read SSIW…VAMG, LIWV…AGLA, YLTW…LADT, LFTA…AALI, WVFY…LLVQ, IFGT…ILWA, and GVAL…DILA. At lysine 241 the chain carries N6-(retinylidene)lysine.

Belongs to the archaeal/bacterial/fungal opsin family. Post-translationally, the covalent binding of retinal to the apoprotein, bacterioopsin, generates bacteriorhodopsin.

Its subcellular location is the membrane. Light-driven chloride pump. The chain is Halorhodopsin (hop) from Haloarcula marismortui (strain ATCC 43049 / DSM 3752 / JCM 8966 / VKM B-1809) (Halobacterium marismortui).